The primary structure comprises 434 residues: MADETFKYVILGGGVAAGYAAREFVKQGLNPGELAIISKEAVAPYERPALSKAYLFPESPARLPGFHVCVGSGGERLLPDWYKEKGIELILSTEIVEADLPAKRLRSAHGKIYNYQTLIIATGSTVIKLSDFGVQGADAKNIFYLREIDDADQLVEAIKAKENGKVVVVGGGYIGLELGAALRINNFDVSMVYPEPWCMPRLFTPEIAAFYEGYYAQKGITIIKGTVAVGFTVDTNGEVKEVKLKDGRVLEADIVVVGVGARPLTSLFKGQIVEEKGGIKTDEFFKTSVPDVYAVGDVATFPLKLYNELRRVEHVDHSRKSAEQAVKAIKASEEGKAIEEYDYLPYFYSRSFDLSWQFYGDNVGDAVLFGDNSPDSATHKFGSYWIKDGKVVGAFLESGSPEENKAIAKVARIQPSVESSDLLLKEGISFASKV.

Residues 13–16 (GGVA), E40, R47, K52, I95, and 146–147 (RE) contribute to the FAD site. NAD(+)-binding positions include 171–177 (GGYIGLE), E195, R201, and G260. 173–177 (YIGLE) contributes to the NADP(+) binding site. R201 and G260 together coordinate NADP(+). D297 is a binding site for FAD. 313–314 (EH) provides a ligand contact to NAD(+). Residue 313–314 (EH) participates in NADP(+) binding. FAD is bound at residue V315. R319 is a binding site for L-ascorbate. Residue Y348 participates in FAD binding. Y348 serves as a coordination point for NAD(+). Y348 provides a ligand contact to NADP(+). R350 is a binding site for L-ascorbate.

This sequence belongs to the FAD-dependent oxidoreductase family. The cofactor is FAD.

The protein localises to the cytoplasm. It catalyses the reaction 2 monodehydro-L-ascorbate radical + NADH + H(+) = 2 L-ascorbate + NAD(+). Its function is as follows. Catalyzes the conversion of monodehydroascorbate to ascorbate, oxidizing NADH in the process. In Cucumis sativus (Cucumber), this protein is Monodehydroascorbate reductase, seedling isozyme.